A 136-amino-acid chain; its full sequence is Ribonuclease P protein component (136 aa).

The protein belongs to the RnpA family. As to quaternary structure, consists of a catalytic RNA component (M1 or rnpB) and a protein subunit.

The enzyme catalyses Endonucleolytic cleavage of RNA, removing 5'-extranucleotides from tRNA precursor.. Functionally, RNaseP catalyzes the removal of the 5'-leader sequence from pre-tRNA to produce the mature 5'-terminus. It can also cleave other RNA substrates such as 4.5S RNA. The protein component plays an auxiliary but essential role in vivo by binding to the 5'-leader sequence and broadening the substrate specificity of the ribozyme. The sequence is that of Ribonuclease P protein component from Burkholderia mallei (strain NCTC 10247).